The primary structure comprises 149 residues: Azurin (149 aa).

Positions Met1–Ala20 are cleaved as a signal peptide. In terms of domain architecture, Plastocyanin-like spans Ala21–Asn149. Cys23 and Cys46 are oxidised to a cystine. 4 residues coordinate Cu cation: His66, Cys132, His137, and Met141.

It is found in the periplasm. In terms of biological role, transfers electrons from cytochrome c551 to cytochrome oxidase. The protein is Azurin (azu) of Achromobacter denitrificans (Alcaligenes denitrificans).